Reading from the N-terminus, the 546-residue chain is Cytochrome P450 monooxygenase 219 (546 aa).

Positions 1-22 (MATLIVLLYGLLAFGTVWLVRR) are cleaved as a signal peptide. N-linked (GlcNAc...) asparagine glycosylation is found at Asn367 and Asn441. Cys487 is a heme binding site.

It belongs to the cytochrome P450 family. It depends on heme as a cofactor.

It functions in the pathway secondary metabolite biosynthesis. Cytochrome P450 monooxygenase that is able to use testosterone, anthracene, carbazole, pyrene, phenanthrene and trans-stilbene as substrates for oxidation. These multifunctional properties against a series of polycyclic aromatic hydrocarbons (PAHs) suggest that CYP219 would play important roles, at least in part, in fungal metabolic systems involved in xenobiotic detoxification. This chain is Cytochrome P450 monooxygenase 219, found in Postia placenta (strain ATCC 44394 / Madison 698-R) (Brown rot fungus).